The sequence spans 91 residues: Ice-structuring protein 2A7 (91 aa).

The N-terminal stretch at 1–21 is a signal peptide; sequence MALSLFTVGQLIFLFWTMRIT. Residues 22–39 constitute a propeptide, removed by a dipeptidylpeptidase; it reads EANPDPAAKAVPAAAAPD.

The protein belongs to the type-I AFP family. Detected in blood serum (at protein level).

The protein localises to the secreted. Its function is as follows. Contributes to protect fish blood from freezing at subzero sea water temperatures. Lowers the blood freezing point. Binds to nascent ice crystals and prevents further growth. This Pseudopleuronectes americanus (Winter flounder) protein is Ice-structuring protein 2A7.